The chain runs to 197 residues: MPETEKIAEVFEELTGSKISKNFLDHRKIFLWGPVTDESSKDLVGKLLYLEMKDPGKKITFYINSPGGVVTSGMTVFDTIKMISSPVHTVCMGMAASMGSVLLAAGTKGERSIWPNGKVMIHQPSIGGQIVAPATDLKIHAEEILKTKTKLNQILADACGHPISKLEEDTDRDYYMDAEEAIKYGIVDKLATKIDFN.

The active-site Nucleophile is Ser-97. His-122 is an active-site residue.

It belongs to the peptidase S14 family. In terms of assembly, fourteen ClpP subunits assemble into 2 heptameric rings which stack back to back to give a disk-like structure with a central cavity, resembling the structure of eukaryotic proteasomes.

The protein localises to the cytoplasm. The catalysed reaction is Hydrolysis of proteins to small peptides in the presence of ATP and magnesium. alpha-casein is the usual test substrate. In the absence of ATP, only oligopeptides shorter than five residues are hydrolyzed (such as succinyl-Leu-Tyr-|-NHMec, and Leu-Tyr-Leu-|-Tyr-Trp, in which cleavage of the -Tyr-|-Leu- and -Tyr-|-Trp bonds also occurs).. Its function is as follows. Cleaves peptides in various proteins in a process that requires ATP hydrolysis. Has a chymotrypsin-like activity. Plays a major role in the degradation of misfolded proteins. This is ATP-dependent Clp protease proteolytic subunit 2 from Leptospira interrogans serogroup Icterohaemorrhagiae serovar copenhageni (strain Fiocruz L1-130).